The chain runs to 396 residues: NADH-quinone oxidoreductase subunit D (396 aa).

The protein belongs to the complex I 49 kDa subunit family. As to quaternary structure, NDH-1 is composed of 14 different subunits. Subunits NuoB, C, D, E, F, and G constitute the peripheral sector of the complex.

It is found in the cell inner membrane. The catalysed reaction is a quinone + NADH + 5 H(+)(in) = a quinol + NAD(+) + 4 H(+)(out). NDH-1 shuttles electrons from NADH, via FMN and iron-sulfur (Fe-S) centers, to quinones in the respiratory chain. The immediate electron acceptor for the enzyme in this species is believed to be ubiquinone. Couples the redox reaction to proton translocation (for every two electrons transferred, four hydrogen ions are translocated across the cytoplasmic membrane), and thus conserves the redox energy in a proton gradient. This Brucella anthropi (strain ATCC 49188 / DSM 6882 / CCUG 24695 / JCM 21032 / LMG 3331 / NBRC 15819 / NCTC 12168 / Alc 37) (Ochrobactrum anthropi) protein is NADH-quinone oxidoreductase subunit D.